Consider the following 173-residue polypeptide: NADH-ubiquinone oxidoreductase chain 6 (173 aa).

A run of 5 helical transmembrane segments spans residues 1–21 (MTYFMLFLGLCFVLGGLAVAS), 27–47 (YGVVGLVLASVVGCGWLMSLG), 48–68 (MSFVSLVLFMVYLGGMLVVFV), 87–107 (VVGYGVSFIVVLAAGAVVGGL), and 139–159 (CGVGMFLVAGWGLLLTLFVVL).

Belongs to the complex I subunit 6 family.

Its subcellular location is the mitochondrion membrane. It carries out the reaction a ubiquinone + NADH + 5 H(+)(in) = a ubiquinol + NAD(+) + 4 H(+)(out). In terms of biological role, core subunit of the mitochondrial membrane respiratory chain NADH dehydrogenase (Complex I) that is believed to belong to the minimal assembly required for catalysis. Complex I functions in the transfer of electrons from NADH to the respiratory chain. The immediate electron acceptor for the enzyme is believed to be ubiquinone. This is NADH-ubiquinone oxidoreductase chain 6 (MT-ND6) from Synthliboramphus antiquus (Ancient murrelet).